Reading from the N-terminus, the 438-residue chain is Protein ROOT INITIATION DEFECTIVE 3 (438 aa).

6 WD repeats span residues 36–74 (AHGLTAVGEKFLASSQLSARNTSGSIFYWSWTKPQAEVK), 76–115 (YPVEPIKALAANNEGTYLVGGGISGDIYLWEVATGKLLKK), 118–157 (GHYRSVTCLVFSGDDSLLVSGSQDGSIRVWSLIRLFDDFQ), 171–212 (EHTM…LLKN), 214–253 (IFPSVINALALDPGGCVFYAGARDSKIYIGAINATSEYGT), and 261–300 (EKGKAITCLAYCADGNLLISGSEDGVVCVWDPKSLRHVRT). Positions 394–434 (AATEMEMERLKLEYKRSLQMNEQWQKNYENLLQVVMEEEQI) form a coiled coil.

Involved in meristem development. Acts as a negative regulator of the CUC-STM pathway in shoot apical meristem (SAM) neo-formation. This chain is Protein ROOT INITIATION DEFECTIVE 3 (RID3), found in Arabidopsis thaliana (Mouse-ear cress).